The sequence spans 354 residues: 4-hydroxy-2-oxovalerate aldolase 6 (354 aa).

A Pyruvate carboxyltransferase domain is found at 10-262 (VRIVDTTLRD…ATGLDVMATL (253 aa)). 18-19 (RD) provides a ligand contact to substrate. Position 19 (Asp19) interacts with Mn(2+). His22 acts as the Proton acceptor in catalysis. Positions 172 and 201 each coordinate substrate. 2 residues coordinate Mn(2+): His201 and His203. A substrate-binding site is contributed by Tyr292.

This sequence belongs to the 4-hydroxy-2-oxovalerate aldolase family.

The catalysed reaction is (S)-4-hydroxy-2-oxopentanoate = acetaldehyde + pyruvate. The polypeptide is 4-hydroxy-2-oxovalerate aldolase 6 (Rhodococcus jostii (strain RHA1)).